The sequence spans 127 residues: Aspartate 1-decarboxylase (127 aa).

Ser25 (schiff-base intermediate with substrate; via pyruvic acid) is an active-site residue. At Ser25 the chain carries Pyruvic acid (Ser). Thr57 serves as a coordination point for substrate. Tyr58 functions as the Proton donor in the catalytic mechanism. 73–75 (GAA) contributes to the substrate binding site.

Belongs to the PanD family. As to quaternary structure, heterooctamer of four alpha and four beta subunits. It depends on pyruvate as a cofactor. Is synthesized initially as an inactive proenzyme, which is activated by self-cleavage at a specific serine bond to produce a beta-subunit with a hydroxyl group at its C-terminus and an alpha-subunit with a pyruvoyl group at its N-terminus.

The protein resides in the cytoplasm. It carries out the reaction L-aspartate + H(+) = beta-alanine + CO2. It functions in the pathway cofactor biosynthesis; (R)-pantothenate biosynthesis; beta-alanine from L-aspartate: step 1/1. Catalyzes the pyruvoyl-dependent decarboxylation of aspartate to produce beta-alanine. The protein is Aspartate 1-decarboxylase of Trichormus variabilis (strain ATCC 29413 / PCC 7937) (Anabaena variabilis).